Reading from the N-terminus, the 238-residue chain is Probable transcriptional regulatory protein CF0838 (238 aa).

Belongs to the TACO1 family.

The protein resides in the cytoplasm. The polypeptide is Probable transcriptional regulatory protein CF0838 (Chlamydia felis (strain Fe/C-56) (Chlamydophila felis)).